Here is a 181-residue protein sequence, read N- to C-terminus: Monofunctional chorismate mutase (181 aa).

The signal sequence occupies residues 1-20 (MIRHIAIFLCSLLMCSTTFA). In terms of domain architecture, Chorismate mutase spans 21-102 (DSVTSVSLGA…ASKAIQYRYL (82 aa)). 5 residues coordinate substrate: Arg38, Lys49, Asp58, Glu62, and Gln98.

Its subcellular location is the periplasm. It carries out the reaction chorismate = prephenate. Its pathway is metabolic intermediate biosynthesis; prephenate biosynthesis; prephenate from chorismate: step 1/1. Catalyzes the Claisen rearrangement of chorismate to prephenate. This Salmonella typhimurium protein is Monofunctional chorismate mutase.